The chain runs to 230 residues: 6-carboxyhexanoate--CoA ligase (230 aa).

Belongs to the BioW family. As to quaternary structure, homodimer. The cofactor is Mg(2+).

The enzyme catalyses heptanedioate + ATP + CoA = 6-carboxyhexanoyl-CoA + AMP + diphosphate. It functions in the pathway metabolic intermediate metabolism; pimeloyl-CoA biosynthesis; pimeloyl-CoA from pimelate: step 1/1. Catalyzes the transformation of pimelate into pimeloyl-CoA with concomitant hydrolysis of ATP to AMP. This is 6-carboxyhexanoate--CoA ligase from Staphylococcus aureus (strain Mu3 / ATCC 700698).